A 125-amino-acid chain; its full sequence is UPF0102 protein PA4424 (125 aa).

The protein belongs to the UPF0102 family.

In Pseudomonas aeruginosa (strain ATCC 15692 / DSM 22644 / CIP 104116 / JCM 14847 / LMG 12228 / 1C / PRS 101 / PAO1), this protein is UPF0102 protein PA4424.